A 582-amino-acid chain; its full sequence is ATP-dependent lipid A-core flippase (582 aa).

Helical transmembrane passes span leucine 16 to isoleucine 36, valine 63 to phenylalanine 83, isoleucine 153 to valine 173, proline 253 to proline 273, and valine 275 to methionine 295. An ABC transmembrane type-1 domain is found at alanine 28 to arginine 310. Residues leucine 342–methionine 578 form the ABC transporter domain. Glycine 376–serine 383 is a binding site for ATP.

It belongs to the ABC transporter superfamily. Lipid exporter (TC 3.A.1.106) family. Homodimer.

It localises to the cell inner membrane. It carries out the reaction ATP + H2O + lipid A-core oligosaccharideSide 1 = ADP + phosphate + lipid A-core oligosaccharideSide 2.. Functionally, involved in lipopolysaccharide (LPS) biosynthesis. Translocates lipid A-core from the inner to the outer leaflet of the inner membrane. Transmembrane domains (TMD) form a pore in the inner membrane and the ATP-binding domain (NBD) is responsible for energy generation. In Pectobacterium atrosepticum (strain SCRI 1043 / ATCC BAA-672) (Erwinia carotovora subsp. atroseptica), this protein is ATP-dependent lipid A-core flippase.